A 271-amino-acid chain; its full sequence is 3-methyl-2-oxobutanoate hydroxymethyltransferase (271 aa).

Residues Asp-50 and Asp-89 each coordinate Mg(2+). 3-methyl-2-oxobutanoate contacts are provided by residues 50 to 51, Asp-89, and Lys-118; that span reads DS. Mg(2+) is bound at residue Glu-120. Glu-187 serves as the catalytic Proton acceptor.

This sequence belongs to the PanB family. As to quaternary structure, homodecamer; pentamer of dimers. Requires Mg(2+) as cofactor.

It localises to the cytoplasm. The enzyme catalyses 3-methyl-2-oxobutanoate + (6R)-5,10-methylene-5,6,7,8-tetrahydrofolate + H2O = 2-dehydropantoate + (6S)-5,6,7,8-tetrahydrofolate. The protein operates within cofactor biosynthesis; (R)-pantothenate biosynthesis; (R)-pantoate from 3-methyl-2-oxobutanoate: step 1/2. Functionally, catalyzes the reversible reaction in which hydroxymethyl group from 5,10-methylenetetrahydrofolate is transferred onto alpha-ketoisovalerate to form ketopantoate. This Campylobacter concisus (strain 13826) protein is 3-methyl-2-oxobutanoate hydroxymethyltransferase.